The sequence spans 461 residues: MAQTLTEFDTIAAISTPIGEGGISIVRMSGEDAVKIANEVFKGADLTKVPTHTIHYGHIVDPDTDKTIDESMVTVLRAPKTFTREDIVEINCHGGIVVTNHILQLLLSHGARMADPGEFTKRAFVNGRIDLTQAESVMDIVRAKTDKARQVAVGQLAGGLLHKIQAMRQEILDTLANVEVNIDYPEYDADTVTAKQMADTAKSVIKKIDRLLKTAQEGKILRNGLATAIVGRPNVGKSSLLNYLTQSDKAIVTDVAGTTRDTLEEYVSVKGVPLELIDTAGIHHTDDKVEKIGVERSKKALDRADLVLLLIDASQELTAEDKALIEETKDKKRIIVLNKSDLGQKITVDEMKKQTGSDVILTSILKEKNLDKLEELINKLFFAGIENSNDQVMVTNQRQTSLLTKAKKELQDVVQAVEDGIPIDIAQIDFTGAWDTLGEITGESAPDELVTQLFSQFCLGK.

(6S)-5-formyl-5,6,7,8-tetrahydrofolate is bound by residues R27, E89, and R128. The TrmE-type G domain occupies 224-382 (GLATAIVGRP…LEELINKLFF (159 aa)). Residue N234 coordinates K(+). Residues 234 to 239 (NVGKSS), 253 to 259 (TDVAGTT), and 278 to 281 (DTAG) each bind GTP. Residue S238 coordinates Mg(2+). K(+) contacts are provided by T253, V255, and T258. T259 serves as a coordination point for Mg(2+). K461 lines the (6S)-5-formyl-5,6,7,8-tetrahydrofolate pocket.

The protein belongs to the TRAFAC class TrmE-Era-EngA-EngB-Septin-like GTPase superfamily. TrmE GTPase family. In terms of assembly, homodimer. Heterotetramer of two MnmE and two MnmG subunits. The cofactor is K(+).

It is found in the cytoplasm. Exhibits a very high intrinsic GTPase hydrolysis rate. Involved in the addition of a carboxymethylaminomethyl (cmnm) group at the wobble position (U34) of certain tRNAs, forming tRNA-cmnm(5)s(2)U34. In Lactobacillus helveticus (strain DPC 4571), this protein is tRNA modification GTPase MnmE.